The sequence spans 723 residues: Catalase-peroxidase (723 aa).

Positions 97-225 (WHAAGSYRVT…LAAVQMGLIY (129 aa)) form a cross-link, tryptophyl-tyrosyl-methioninium (Trp-Tyr) (with M-251). The active-site Proton acceptor is His98. Residues 225–251 (YVNPEGVNGKSDPLATAAQMRETFARM) constitute a cross-link (tryptophyl-tyrosyl-methioninium (Tyr-Met) (with W-97)). Residue His266 coordinates heme b.

The protein belongs to the peroxidase family. Peroxidase/catalase subfamily. Homodimer or homotetramer. It depends on heme b as a cofactor. In terms of processing, formation of the three residue Trp-Tyr-Met cross-link is important for the catalase, but not the peroxidase activity of the enzyme.

It catalyses the reaction H2O2 + AH2 = A + 2 H2O. It carries out the reaction 2 H2O2 = O2 + 2 H2O. Bifunctional enzyme with both catalase and broad-spectrum peroxidase activity. Involved in tumorigenesis. The polypeptide is Catalase-peroxidase (Rhizobium radiobacter (Agrobacterium tumefaciens)).